We begin with the raw amino-acid sequence, 356 residues long: Serine/threonine-protein phosphatase 4 regulatory subunit 2 (356 aa).

Residues 202 to 240 (NEGAGDDEDDDQDYVDEDSATSEDEEEDVEEEEEEEGPE) are compositionally biased toward acidic residues. A disordered region spans residues 202–335 (NEGAGDDEDD…PQLTTSATNV (134 aa)). The span at 326 to 335 (PQLTTSATNV) shows a compositional bias: polar residues.

The protein belongs to the PPP4R2 family. Regulatory subunit (R2) of the histone H2A phosphatase complex (HTP-C) consisting of PPH3, PSY2 and PSY4.

It localises to the nucleus. Regulatory subunit of the histone H2A phosphatase complex, which dephosphorylates H2AS128ph (gamma-H2A) that has been displaced from sites of DNA lesions in the double-stranded DNA break repair process. Dephosphorylation is necessary for efficient recovery from the DNA damage checkpoint. The sequence is that of Serine/threonine-protein phosphatase 4 regulatory subunit 2 (PSY4) from Eremothecium gossypii (strain ATCC 10895 / CBS 109.51 / FGSC 9923 / NRRL Y-1056) (Yeast).